Reading from the N-terminus, the 379-residue chain is AT-rich binding protein (379 aa).

Residues I29–H52 form a C2H2-type 1 zinc finger. Residues E114–H124 are compositionally biased toward basic and acidic residues. Disordered stretches follow at residues E114–K148 and P221–L267. Composition is skewed to low complexity over residues Q125–Q143, A223–P242, and Q249–Q262. 2 consecutive C2H2-type zinc fingers follow at residues Y312–H336 and F342–H365.

Its subcellular location is the nucleus. Functionally, may be a transcription factor for genes having (A+T) stretches in their promoter and/or enhancer regions. Binds to AT rich DNA. The protein is AT-rich binding protein of Drosophila willistoni (Fruit fly).